Here is a 255-residue protein sequence, read N- to C-terminus: UPF0246 protein CC_3385 (255 aa).

It belongs to the UPF0246 family.

The chain is UPF0246 protein CC_3385 from Caulobacter vibrioides (strain ATCC 19089 / CIP 103742 / CB 15) (Caulobacter crescentus).